We begin with the raw amino-acid sequence, 100 residues long: Urease subunit gamma (100 aa).

The protein belongs to the urease gamma subunit family. In terms of assembly, heterotrimer of UreA (gamma), UreB (beta) and UreC (alpha) subunits. Three heterotrimers associate to form the active enzyme.

The protein localises to the cytoplasm. The enzyme catalyses urea + 2 H2O + H(+) = hydrogencarbonate + 2 NH4(+). The protein operates within nitrogen metabolism; urea degradation; CO(2) and NH(3) from urea (urease route): step 1/1. In Nocardia farcinica (strain IFM 10152), this protein is Urease subunit gamma.